The primary structure comprises 214 residues: Probable nicotinate-nucleotide adenylyltransferase (214 aa).

Belongs to the NadD family.

The catalysed reaction is nicotinate beta-D-ribonucleotide + ATP + H(+) = deamido-NAD(+) + diphosphate. The protein operates within cofactor biosynthesis; NAD(+) biosynthesis; deamido-NAD(+) from nicotinate D-ribonucleotide: step 1/1. Functionally, catalyzes the reversible adenylation of nicotinate mononucleotide (NaMN) to nicotinic acid adenine dinucleotide (NaAD). The sequence is that of Probable nicotinate-nucleotide adenylyltransferase from Rhodopirellula baltica (strain DSM 10527 / NCIMB 13988 / SH1).